A 737-amino-acid chain; its full sequence is Methylcrotonoyl-CoA carboxylase subunit alpha, mitochondrial (737 aa).

The transit peptide at 1–33 (MASRLLLLPRRRSRHGGASLLLARLLSSSSSEA) directs the protein to the mitochondrion. Residues 38 to 485 (AVEKVLVANR…DTHFIERYQN (448 aa)) enclose the Biotin carboxylation domain. ATP contacts are provided by residues lysine 153, 185–246 (ANKI…PRHI), glutamate 237, and histidine 272. One can recognise an ATP-grasp domain in the interval 157–355 (KRIMGAAGVP…LVEWQIRIAN (199 aa)). Residues glutamate 312, glutamate 326, and asparagine 328 each contribute to the Mn(2+) site. Residue arginine 330 is part of the active site. The disordered stretch occupies residues 636–665 (YRQTLRAEQSPDDSSQPSASSEARSHPKGS). Positions 647 to 657 (DDSSQPSASSE) are enriched in low complexity. Residues 656–732 (SEARSHPKGS…FDSSVLFTVK (77 aa)) enclose the Biotinyl-binding domain. Residue lysine 698 is modified to N6-biotinyllysine.

Probably a heterodimer composed of biotin-containing alpha subunits and beta subunits. Biotin is required as a cofactor. The cofactor is Mn(2+).

The protein resides in the mitochondrion matrix. It catalyses the reaction 3-methylbut-2-enoyl-CoA + hydrogencarbonate + ATP = 3-methyl-(2E)-glutaconyl-CoA + ADP + phosphate + H(+). The protein operates within amino-acid degradation; L-leucine degradation; (S)-3-hydroxy-3-methylglutaryl-CoA from 3-isovaleryl-CoA: step 2/3. Functionally, biotin-attachment subunit of the 3-methylcrotonyl-CoA carboxylase, an enzyme that catalyzes the conversion of 3-methylcrotonyl-CoA to 3-methylglutaconyl-CoA, a critical step for leucine and isovaleric acid catabolism. In Oryza sativa subsp. japonica (Rice), this protein is Methylcrotonoyl-CoA carboxylase subunit alpha, mitochondrial (MCCA).